We begin with the raw amino-acid sequence, 454 residues long: GTPase Obg (454 aa).

An Obg domain is found at 2 to 159 (SDFVDEAVLH…VDIRLELKTI (158 aa)). Positions 60–87 (YQRRPHRKAENGAPGQGSNRSGASGADL) are disordered. The OBG-type G domain maps to 160-335 (ADVGLVGFPS…LAYALGEQVA (176 aa)). GTP-binding positions include 166–173 (GFPSAGKS), 191–195 (FTTLV), 212–215 (DVPG), 287–290 (NKID), and 316–318 (SAA). Ser-173 and Thr-193 together coordinate Mg(2+). The region spanning 353-435 (PREIGEIPFQ…DNPVVFDWDP (83 aa)) is the OCT domain.

It belongs to the TRAFAC class OBG-HflX-like GTPase superfamily. OBG GTPase family. Monomer. It depends on Mg(2+) as a cofactor.

It localises to the cytoplasm. Its function is as follows. An essential GTPase which binds GTP, GDP and possibly (p)ppGpp with moderate affinity, with high nucleotide exchange rates and a fairly low GTP hydrolysis rate. Plays a role in control of the cell cycle, stress response, ribosome biogenesis and in those bacteria that undergo differentiation, in morphogenesis control. The polypeptide is GTPase Obg (Thermobifida fusca (strain YX)).